The sequence spans 255 residues: Uridylate kinase (255 aa).

ATP is bound at residue 22 to 25; it reads KLSG. Positions 30–35 are involved in allosteric activation by GTP; the sequence is GNGGYG. Glycine 64 serves as a coordination point for UMP. ATP contacts are provided by glycine 65 and arginine 69. UMP is bound by residues aspartate 85 and 146-153; that span reads TGNPFFTT. Residues asparagine 174, tyrosine 180, and aspartate 183 each contribute to the ATP site.

Belongs to the UMP kinase family. As to quaternary structure, homohexamer.

It localises to the cytoplasm. It catalyses the reaction UMP + ATP = UDP + ADP. Its pathway is pyrimidine metabolism; CTP biosynthesis via de novo pathway; UDP from UMP (UMPK route): step 1/1. Its activity is regulated as follows. Allosterically activated by GTP. Inhibited by UTP. In terms of biological role, catalyzes the reversible phosphorylation of UMP to UDP. This is Uridylate kinase from Rubrobacter xylanophilus (strain DSM 9941 / JCM 11954 / NBRC 16129 / PRD-1).